The following is a 168-amino-acid chain: Phosphopantetheine adenylyltransferase (168 aa).

Ser-9 provides a ligand contact to substrate. Residues 9–10 (SF) and His-17 contribute to the ATP site. Residues Lys-41, Leu-73, and Arg-87 each coordinate substrate. Residues 88-90 (GMR), Glu-98, and 123-129 (WIYTSSS) each bind ATP.

The protein belongs to the bacterial CoaD family. In terms of assembly, homohexamer. Mg(2+) serves as cofactor.

It is found in the cytoplasm. The catalysed reaction is (R)-4'-phosphopantetheine + ATP + H(+) = 3'-dephospho-CoA + diphosphate. It functions in the pathway cofactor biosynthesis; coenzyme A biosynthesis; CoA from (R)-pantothenate: step 4/5. Reversibly transfers an adenylyl group from ATP to 4'-phosphopantetheine, yielding dephospho-CoA (dPCoA) and pyrophosphate. The protein is Phosphopantetheine adenylyltransferase of Desulfosudis oleivorans (strain DSM 6200 / JCM 39069 / Hxd3) (Desulfococcus oleovorans).